The following is a 427-amino-acid chain: Glutamate-1-semialdehyde 2,1-aminomutase (427 aa).

Lysine 265 is subject to N6-(pyridoxal phosphate)lysine.

The protein belongs to the class-III pyridoxal-phosphate-dependent aminotransferase family. HemL subfamily. Homodimer. Pyridoxal 5'-phosphate is required as a cofactor.

It is found in the cytoplasm. The enzyme catalyses (S)-4-amino-5-oxopentanoate = 5-aminolevulinate. It functions in the pathway porphyrin-containing compound metabolism; protoporphyrin-IX biosynthesis; 5-aminolevulinate from L-glutamyl-tRNA(Glu): step 2/2. The protein is Glutamate-1-semialdehyde 2,1-aminomutase of Edwardsiella ictaluri (strain 93-146).